The primary structure comprises 93 residues: MLTELEKALNSIIDVYHKYSLIKGNFHAVYRDDLKKLLETECPQYIRKKGADVWFKELDINTDGAVNFQEFLILVIKMGVAAHKKSHEESHKE.

EF-hand domains are found at residues 12-47 (IIDV…QYIR) and 46-81 (IRKK…MGVA). Positions 17 and 27 each coordinate Zn(2+). Ca(2+) is bound at residue Asp33. S-nitrosocysteine is present on Cys42. Ca(2+) contacts are provided by Asp59, Asn61, Asp63, and Glu70. Zn(2+) is bound by residues His83 and His87.

This sequence belongs to the S-100 family. As to quaternary structure, homodimer. Preferentially exists as a heterodimer or heterotetramer with S100A9 known as calprotectin (S100A8/A9). S100A8 interacts with AGER, ATP2A2 and with the heterodimeric complex formed by TLR4 and LY96. Interacts with GAPDH. Calprotectin (S100A8/9) interacts with CEACAM3 and tubulin filaments in a calcium-dependent manner. Heterotetrameric calprotectin (S100A8/A9) interacts with ANXA6 and associates with tubulin filaments in activated monocytes. S100A8 and calprotectin (S100A8/9) interact with NCF2/P67PHOX, RAC1 and RAC2. Calprotectin (S100A8/9) interacts with CYBA and CYBB. Calprotectin (S100A8/9) interacts with NOS2 to form the iNOS-S100A8/A9 transnitrosylase complex; induced by LDL(ox). Calprotectin (S100A8/9) interacts with CD69. As to expression, calprotectin (S100A8/9) is predominantly expressed in myeloid cells. Except for inflammatory conditions, the expression is restricted to a specific stage of myeloid differentiation since both proteins are expressed in circulating neutrophils and monocytes but are absent in normal tissue macrophages and lymphocytes. Under chronic inflammatory conditions, such as psoriasis and malignant disorders, also expressed in the epidermis. Found in high concentrations at local sites of inflammation or in the serum of patients with inflammatory diseases such as rheumatoid, cystic fibrosis, inflammatory bowel disease, Crohn's disease, giant cell arteritis, cystic fibrosis, Sjogren's syndrome, systemic lupus erythematosus, and progressive systemic sclerosis. Involved in the formation and deposition of amyloids in the aging prostate known as corpora amylacea inclusions. Strongly up-regulated in many tumors, including gastric, esophageal, colon, pancreatic, bladder, ovarian, thyroid, breast and skin cancers.

The protein resides in the secreted. Its subcellular location is the cytoplasm. The protein localises to the cytoskeleton. It is found in the cell membrane. Calprotectin (S100A8/A9) activity on TLR4 signaling is inhibited by paquinimod. S100A8 is a calcium- and zinc-binding protein which plays a prominent role in the regulation of inflammatory processes and immune response. It can induce neutrophil chemotaxis and adhesion. Predominantly found as calprotectin (S100A8/A9) which has a wide plethora of intra- and extracellular functions. The intracellular functions include: facilitating leukocyte arachidonic acid trafficking and metabolism, modulation of the tubulin-dependent cytoskeleton during migration of phagocytes and activation of the neutrophilic NADPH-oxidase. Also participates in regulatory T-cell differentiation together with CD69. Activates NADPH-oxidase by facilitating the enzyme complex assembly at the cell membrane, transferring arachidonic acid, an essential cofactor, to the enzyme complex and S100A8 contributes to the enzyme assembly by directly binding to NCF2/P67PHOX. The extracellular functions involve pro-inflammatory, antimicrobial, oxidant-scavenging and apoptosis-inducing activities. Its pro-inflammatory activity includes recruitment of leukocytes, promotion of cytokine and chemokine production, and regulation of leukocyte adhesion and migration. Acts as an alarmin or a danger associated molecular pattern (DAMP) molecule and stimulates innate immune cells via binding to pattern recognition receptors such as Toll-like receptor 4 (TLR4) and receptor for advanced glycation endproducts (AGER). Binding to TLR4 and AGER activates the MAP-kinase and NF-kappa-B signaling pathways resulting in the amplification of the pro-inflammatory cascade. Has antimicrobial activity towards bacteria and fungi and exerts its antimicrobial activity probably via chelation of Zn(2+) which is essential for microbial growth. Can induce cell death via autophagy and apoptosis and this occurs through the cross-talk of mitochondria and lysosomes via reactive oxygen species (ROS) and the process involves BNIP3. Can regulate neutrophil number and apoptosis by an anti-apoptotic effect; regulates cell survival via ITGAM/ITGB and TLR4 and a signaling mechanism involving MEK-ERK. Its role as an oxidant scavenger has a protective role in preventing exaggerated tissue damage by scavenging oxidants. Can act as a potent amplifier of inflammation in autoimmunity as well as in cancer development and tumor spread. The iNOS-S100A8/A9 transnitrosylase complex directs selective inflammatory stimulus-dependent S-nitrosylation of GAPDH and probably multiple targets such as ANXA5, EZR, MSN and VIM by recognizing a [IL]-x-C-x-x-[DE] motif; S100A8 seems to contribute to S-nitrosylation site selectivity. Its function is as follows. (Microbial infection) Upon infection by human coronavirus SARS-CoV-2, may induce expansion of aberrant immature neutrophils in a TLR4-dependent manner. In Homo sapiens (Human), this protein is Protein S100-A8.